Consider the following 495-residue polypeptide: Glutamyl-tRNA(Gln) amidotransferase subunit A (495 aa).

Catalysis depends on charge relay system residues Lys-75 and Ser-150. Ser-174 serves as the catalytic Acyl-ester intermediate.

This sequence belongs to the amidase family. GatA subfamily. In terms of assembly, heterotrimer of A, B and C subunits.

The enzyme catalyses L-glutamyl-tRNA(Gln) + L-glutamine + ATP + H2O = L-glutaminyl-tRNA(Gln) + L-glutamate + ADP + phosphate + H(+). Allows the formation of correctly charged Gln-tRNA(Gln) through the transamidation of misacylated Glu-tRNA(Gln) in organisms which lack glutaminyl-tRNA synthetase. The reaction takes place in the presence of glutamine and ATP through an activated gamma-phospho-Glu-tRNA(Gln). This Paraburkholderia phytofirmans (strain DSM 17436 / LMG 22146 / PsJN) (Burkholderia phytofirmans) protein is Glutamyl-tRNA(Gln) amidotransferase subunit A.